The primary structure comprises 221 residues: MSDAPAESAPAQIDPAQTDPAEQPVQILPRERSDIPDAVARIPRPPVPHLDPPFALRVARLGDADMVAEWMNRPHLAAAWEYDWPTPRWRRHLGAQLQGSYSLPLIGSMRGVDLAYLELYWAAKDLISRYYDAEPYDLGLHAAIADVKLVNRGLGPMLLPRIVASVFATEPRCRRVMFDPDHRNTTARRLCEYAGCRFLGEHDTTNRRMALYALDAPTTDR.

The disordered stretch occupies residues 1-34; it reads MSDAPAESAPAQIDPAQTDPAEQPVQILPRERSD. A substrate-binding site is contributed by H141. The active-site Proton acceptor is D179.

The protein belongs to the lysine N-acyltransferase MbtK family. As to quaternary structure, monomer.

It functions in the pathway siderophore biosynthesis; mycobactin biosynthesis. Its function is as follows. Acyltransferase required for the direct transfer of medium- to long-chain fatty acyl moieties from a carrier protein (MbtL) on to the epsilon-amino group of lysine residue in the mycobactin core. The chain is Lysine N-acyltransferase MbtK (mbtK) from Mycolicibacterium paratuberculosis (strain ATCC BAA-968 / K-10) (Mycobacterium paratuberculosis).